A 77-amino-acid polypeptide reads, in one-letter code: Bradykinin-potentiating peptide (77 aa).

The N-terminal stretch at 1–22 (MNKKTLLVIFIVTLLIADEVNS) is a signal peptide. Residues 74–77 (RRRR) constitute a propeptide that is removed on maturation.

Belongs to the non-disulfide-bridged peptide (NDBP) superfamily. Long chain multifunctional peptide (group 2) family. As to expression, expressed by the venom gland.

It localises to the secreted. Antimicrobial peptide. May also inhibit angiotensin-converting enzyme (ACE) and potentiate bradykinin (BK). In Tityus discrepans (Venezuelan scorpion), this protein is Bradykinin-potentiating peptide.